The sequence spans 59 residues: MKYRESILNFIKQSKRVLRVSKKPSREEYLNVSKVTGIGIIIIGVIGFIISIIAQLLGG.

Residues 37 to 57 (GIGIIIIGVIGFIISIIAQLL) traverse the membrane as a helical segment.

Belongs to the SecE/SEC61-gamma family. In terms of assembly, component of the Sec protein translocase complex. Heterotrimer consisting of SecY (alpha), SecG (beta) and SecE (gamma) subunits. The heterotrimers can form oligomers, although 1 heterotrimer is thought to be able to translocate proteins. Interacts with the ribosome. May interact with SecDF, and other proteins may be involved.

The protein resides in the cell membrane. Functionally, essential subunit of the Sec protein translocation channel SecYEG. Clamps together the 2 halves of SecY. May contact the channel plug during translocation. The polypeptide is Protein translocase subunit SecE (Methanothermobacter thermautotrophicus (strain ATCC 29096 / DSM 1053 / JCM 10044 / NBRC 100330 / Delta H) (Methanobacterium thermoautotrophicum)).